The primary structure comprises 333 residues: Ribosomal RNA small subunit methyltransferase H (333 aa).

Residues 31–33 (GGY), Asp49, Phe76, Asp134, and Gln141 contribute to the S-adenosyl-L-methionine site.

Belongs to the methyltransferase superfamily. RsmH family.

Its subcellular location is the cytoplasm. The catalysed reaction is cytidine(1402) in 16S rRNA + S-adenosyl-L-methionine = N(4)-methylcytidine(1402) in 16S rRNA + S-adenosyl-L-homocysteine + H(+). In terms of biological role, specifically methylates the N4 position of cytidine in position 1402 (C1402) of 16S rRNA. The chain is Ribosomal RNA small subunit methyltransferase H from Wolbachia sp. subsp. Brugia malayi (strain TRS).